The following is a 464-amino-acid chain: MGKCCRMLIFAAIAGIAVLYYQITKELPKPNIPLDTWWGPGKPQNVDISIRPFKININNKVIENLKLKLNDVQYTLPLEGINFEYGFNTDSLKKIVDFWRTQYNWREREALLNKYPHFKTNIQGLDIHYVHIKPQVSKNIEVLPLVMIHGWPGSFVEFYKIIPMLTTPRAGYNFVFELILPSIPGYGFSQAAAKPGLGSTQVAVIMRNLMERIGFKKYYVQGGDWGSMIISAMSTLFPENVLGQHSNMCFVNTPSSNIKAIIGSFFPESFAGTGNAHKMYPMSEHFFTLLEEMGYLHLQATKPDTVGVALRDSPAGLAAYILEKFSTWTNRSWRSVKDGNLLLKYNIPELLDNVMIYYVTDSITTSMRLYAESFTKAHLALNLDRVRNHVPAACAKFPNELAYVTDCQLAEKYKTLLQSNDMPSGGHFAAFEEPGLLAEDIFTAVKKFKEFYSKKAESQKKADL.

The helical transmembrane segment at Met7 to Leu27 threads the bilayer. Asp224 acts as the Nucleophile in catalysis. Catalysis depends on Tyr370, which acts as the Proton donor. The active-site Proton acceptor is His427.

Belongs to the peptidase S33 family. As to expression, developing oocytes, fat body and midgut epithelium of adults.

The protein localises to the microsome membrane. It localises to the endoplasmic reticulum membrane. The catalysed reaction is cis-stilbene oxide + H2O = (1R,2R)-hydrobenzoin. It catalyses the reaction 1-(4-methoxyphenyl)-N-methyl-N-[(3-methyloxetan-3-yl)methyl]methanamine + H2O = 2-{[(4-methoxybenzyl)(methyl)amino]methyl}-2-methylpropane-1,3-diol. Catalyzes juvenile hormone hydrolysis. The chain is Juvenile hormone epoxide hydrolase 1 from Ctenocephalides felis (Cat flea).